Reading from the N-terminus, the 764-residue chain is Protein Lines homolog 1 (764 aa).

2 disordered regions span residues 615–668 (SQSQ…TSLC) and 682–702 (WEEQKEHSLEPLLSAESSSPF). The span at 645 to 654 (DSSEASEEET) shows a compositional bias: acidic residues. At Ser650 the chain carries Phosphoserine. Residues 658-668 (HLANSKQTSLC) show a composition bias toward polar residues. Positions 691-702 (EPLLSAESSSPF) are enriched in low complexity.

Belongs to the protein lines family.

This is Protein Lines homolog 1 from Mus musculus (Mouse).